The following is a 104-amino-acid chain: DET1- and DDB1-associated protein 1 (104 aa).

Residues 67–77 (KKNAAKKREQE) are compositionally biased toward basic and acidic residues. A disordered region spans residues 67 to 104 (KKNAAKKREQEQAEGEGGSPAPPRKIARTDSQEMNEDS).

This sequence belongs to the DDA1 family. As to quaternary structure, component of numerous DCX (DDB1-CUL4-X-box) E3 ubiquitin-protein ligase complexes which consist of a core of DDB1, cullin-4 (CUL4A or CUL4B), DDA1 and RBX1.

It participates in protein modification; protein ubiquitination. Its function is as follows. Functions as a component of numerous distinct DCX (DDB1-CUL4-X-box) E3 ubiquitin-protein ligase complexes which mediate the ubiquitination and subsequent proteasomal degradation of target proteins. In the DCX complexes, acts as a scaffolding subunit required to stabilize the complex. This Danio rerio (Zebrafish) protein is DET1- and DDB1-associated protein 1.